A 257-amino-acid chain; its full sequence is Low affinity immunoglobulin gamma Fc region receptor III-A (257 aa).

Residues 1–19 (MWQLLSPTALLLLVSVPGT) form the signal peptide. Topologically, residues 20–209 (HAEDPPKSVV…ILSFFLPWHQ (190 aa)) are extracellular. Ig-like C2-type domains follow at residues 25–104 (PKSV…LRLE) and 108–190 (GWLL…VKVT). 2 cysteine pairs are disulfide-bonded: Cys-48–Cys-90 and Cys-129–Cys-173. Residues Asn-64, Asn-134, and Asn-162 are each glycosylated (N-linked (GlcNAc...) asparagine). Asp-181 is a glycosylation site (N-linked (GlcNAc...) asparagine; in variant N-181). The chain crosses the membrane as a helical span at residues 210–230 (IIFCLVMGFLFAVDTGLYFSV). The Cytoplasmic portion of the chain corresponds to 231 to 257 (RKVLRSSKEDWRNGKVTWSRDPADKGG).

Forms a heterooligomeric complex with ITAM-containing signaling subunits FCER1G. Interacts (via transmembrane domain) with signaling subunits; this interaction is a prerequisite for receptor complex expression on the cell surface and intracellular signal transduction. Binds the Fc region of antigen-complexed IgG. Expressed in polymorphonuclear leukocytes, pulmonary alveolar macrophages and peripheral blood mononuclear cells (at protein level). Found in spleen, and at very low levels in lymph nodes but not in thymus or liver.

It is found in the cell membrane. Functionally, receptor for the invariable Fc fragment of immunoglobulin gamma (IgG). Optimally activated upon binding of clustered antigen-IgG complexes displayed on cell surfaces, triggers lysis of antibody-coated cells, a process known as antibody-dependent cellular cytotoxicity (ADCC). Does not bind free monomeric IgG, thus avoiding inappropriate effector cell activation in the absence of antigenic trigger. Mediates IgG effector functions on natural killer (NK) cells. Binds antigen-IgG complexes generated upon infection and triggers NK cell-dependent cytokine production and degranulation to limit viral load and propagation. Fc-binding subunit that associates with FCER1G adapter to form functional signaling complexes. Following the engagement of antigen-IgG complexes, triggers phosphorylation of immunoreceptor tyrosine-based activation motif (ITAM)-containing adapter with subsequent activation of phosphatidylinositol 3-kinase signaling and sustained elevation of intracellular calcium that ultimately drive NK cell activation. Mediates enhanced ADCC in response to afucosylated IgGs. In Sus scrofa (Pig), this protein is Low affinity immunoglobulin gamma Fc region receptor III-A.